Reading from the N-terminus, the 464-residue chain is Soluble pyridine nucleotide transhydrogenase (464 aa).

Position 35-44 (35-44 (DSRRQVGGNC)) interacts with FAD.

Belongs to the class-I pyridine nucleotide-disulfide oxidoreductase family. FAD serves as cofactor.

It localises to the cytoplasm. The enzyme catalyses NAD(+) + NADPH = NADH + NADP(+). Its function is as follows. Conversion of NADPH, generated by peripheral catabolic pathways, to NADH, which can enter the respiratory chain for energy generation. The protein is Soluble pyridine nucleotide transhydrogenase of Pseudomonas fluorescens (strain Pf0-1).